Here is a 329-residue protein sequence, read N- to C-terminus: Aspartate carbamoyltransferase catalytic subunit (329 aa).

2 residues coordinate carbamoyl phosphate: Arg63 and Thr64. Lys91 contributes to the L-aspartate binding site. Residues Arg113, His141, and Gln144 each coordinate carbamoyl phosphate. L-aspartate-binding residues include Arg179 and Arg234. Positions 275 and 276 each coordinate carbamoyl phosphate.

It belongs to the aspartate/ornithine carbamoyltransferase superfamily. ATCase family. As to quaternary structure, heterododecamer (2C3:3R2) of six catalytic PyrB chains organized as two trimers (C3), and six regulatory PyrI chains organized as three dimers (R2).

The catalysed reaction is carbamoyl phosphate + L-aspartate = N-carbamoyl-L-aspartate + phosphate + H(+). It functions in the pathway pyrimidine metabolism; UMP biosynthesis via de novo pathway; (S)-dihydroorotate from bicarbonate: step 2/3. Functionally, catalyzes the condensation of carbamoyl phosphate and aspartate to form carbamoyl aspartate and inorganic phosphate, the committed step in the de novo pyrimidine nucleotide biosynthesis pathway. In Magnetococcus marinus (strain ATCC BAA-1437 / JCM 17883 / MC-1), this protein is Aspartate carbamoyltransferase catalytic subunit.